The following is a 168-amino-acid chain: Gastrula zinc finger protein XlCGF7.1 (168 aa).

6 consecutive C2H2-type zinc fingers follow at residues 6-28, 34-56, 62-84, 90-112, 118-140, and 146-168; these read FTCTECGKGFSDKSNLRSHQRTH, FTCTECGKSFSQKIGLHNHLKCH, FMCTECGKSFSNKSNLHTHRKIH, YICTECGKTFPRKKNLQSHQTVH, FTCSECGKCFSQKKNLHTHQKIH, and FKCNECGQAFLRKRNLLSHERIH.

Belongs to the krueppel C2H2-type zinc-finger protein family.

The protein resides in the nucleus. Its function is as follows. May be involved in transcriptional regulation. The chain is Gastrula zinc finger protein XlCGF7.1 from Xenopus laevis (African clawed frog).